A 423-amino-acid polypeptide reads, in one-letter code: UPF0229 protein PSEEN0423 (423 aa).

The segment at 85–107 (GEHIARPQGGGGGGGRGKAGNSG) is disordered. Residues 92 to 107 (QGGGGGGGRGKAGNSG) show a composition bias toward gly residues.

The protein belongs to the UPF0229 family.

In Pseudomonas entomophila (strain L48), this protein is UPF0229 protein PSEEN0423.